Here is a 673-residue protein sequence, read N- to C-terminus: Xaa-Pro aminopeptidase 2 (673 aa).

The first 21 residues, 1-21 (MAQACWGCYPWLVLICACAWG), serve as a signal peptide directing secretion. N-linked (GlcNAc...) asparagine glycosylation is found at asparagine 34, asparagine 48, and asparagine 64. Arginine 115 serves as a coordination point for substrate. Residues asparagine 277, asparagine 290, and asparagine 294 are each glycosylated (N-linked (GlcNAc...) asparagine). Substrate is bound at residue histidine 429. Aspartate 449 is a binding site for Mn(2+). Zn(2+) contacts are provided by aspartate 449, aspartate 460, and histidine 523. Positions 523, 532, and 554 each coordinate substrate. Positions 554 and 568 each coordinate Zn(2+). Residue alanine 649 is the site of GPI-anchor amidated alanine attachment. A propeptide spans 650-673 (RAAPTTSLGSLMTVSALAILGWSV) (removed in mature form).

Belongs to the peptidase M24B family. Homotrimer. Zn(2+) is required as a cofactor. Post-translationally, N-glycosylated. Kidney.

Its subcellular location is the cell membrane. The catalysed reaction is Release of any N-terminal amino acid, including proline, that is linked to proline, even from a dipeptide or tripeptide.. With respect to regulation, inhibited by apstatin and the metal ion chelator EDTA. Potently inhibited by the converting enzyme inhibitors cilazaprilat; enalaprilat; L155,212; ramiprilat and YS 980. Also inhibited to a lesser extent by indolaprilat; quinaprilat; spiraprilat; captopril and zofenoprilat. Membrane-bound metalloprotease which catalyzes the removal of a penultimate prolyl residue from the N-termini of peptides, such as Arg-Pro-Pro. May play a role in the metabolism of the vasodilator bradykinin. The protein is Xaa-Pro aminopeptidase 2 (XPNPEP2) of Sus scrofa (Pig).